The chain runs to 226 residues: 7-cyano-7-deazaguanine synthase (226 aa).

8–18 (ISGGLDSTTCL) lines the ATP pocket. The Zn(2+) site is built by cysteine 188, cysteine 198, cysteine 201, and cysteine 204.

The protein belongs to the QueC family. Zn(2+) is required as a cofactor.

The enzyme catalyses 7-carboxy-7-deazaguanine + NH4(+) + ATP = 7-cyano-7-deazaguanine + ADP + phosphate + H2O + H(+). It functions in the pathway purine metabolism; 7-cyano-7-deazaguanine biosynthesis. Functionally, catalyzes the ATP-dependent conversion of 7-carboxy-7-deazaguanine (CDG) to 7-cyano-7-deazaguanine (preQ(0)). This is 7-cyano-7-deazaguanine synthase from Coxiella burnetii (strain Dugway 5J108-111).